Here is a 336-residue protein sequence, read N- to C-terminus: Fructose-1,6-bisphosphatase class 1 (336 aa).

Mg(2+)-binding residues include E92, D115, L117, and D118. Substrate is bound by residues 118 to 121 (DGSS), N211, Y244, 262 to 264 (YLY), and K274. Position 280 (E280) interacts with Mg(2+).

Belongs to the FBPase class 1 family. Homotetramer. Mg(2+) serves as cofactor.

The protein localises to the cytoplasm. It carries out the reaction beta-D-fructose 1,6-bisphosphate + H2O = beta-D-fructose 6-phosphate + phosphate. It participates in carbohydrate biosynthesis; gluconeogenesis. In Vibrio cholerae serotype O1 (strain ATCC 39541 / Classical Ogawa 395 / O395), this protein is Fructose-1,6-bisphosphatase class 1.